Consider the following 124-residue polypeptide: Small ribosomal subunit protein uS13 (124 aa).

Residues Lys93–Ala117 show a composition bias toward basic residues. Residues Lys93–Lys124 form a disordered region.

The protein belongs to the universal ribosomal protein uS13 family. Part of the 30S ribosomal subunit. Forms a loose heterodimer with protein S19. Forms two bridges to the 50S subunit in the 70S ribosome.

Located at the top of the head of the 30S subunit, it contacts several helices of the 16S rRNA. In the 70S ribosome it contacts the 23S rRNA (bridge B1a) and protein L5 of the 50S subunit (bridge B1b), connecting the 2 subunits; these bridges are implicated in subunit movement. Contacts the tRNAs in the A and P-sites. The polypeptide is Small ribosomal subunit protein uS13 (Mycoplasma genitalium (strain ATCC 33530 / DSM 19775 / NCTC 10195 / G37) (Mycoplasmoides genitalium)).